Consider the following 99-residue polypeptide: Malonate decarboxylase acyl carrier protein (99 aa).

Ser25 carries the O-(phosphoribosyl dephospho-coenzyme A)serine modification.

The protein belongs to the MdcC family. Covalently binds the prosthetic group of malonate decarboxylase.

Its subcellular location is the cytoplasm. In terms of biological role, subunit of malonate decarboxylase, it is an acyl carrier protein to which acetyl and malonyl thioester residues are bound via a 2'-(5''-phosphoribosyl)-3'-dephospho-CoA prosthetic group and turn over during the catalytic mechanism. The protein is Malonate decarboxylase acyl carrier protein of Pseudomonas syringae pv. syringae (strain B728a).